A 427-amino-acid polypeptide reads, in one-letter code: Enolase (427 aa).

(2R)-2-phosphoglycerate is bound at residue glutamine 163. Glutamate 205 acts as the Proton donor in catalysis. Mg(2+)-binding residues include aspartate 242, glutamate 285, and aspartate 312. The (2R)-2-phosphoglycerate site is built by lysine 337, arginine 366, serine 367, and lysine 388. The active-site Proton acceptor is the lysine 337.

This sequence belongs to the enolase family. It depends on Mg(2+) as a cofactor.

The protein resides in the cytoplasm. It localises to the secreted. It is found in the cell surface. The enzyme catalyses (2R)-2-phosphoglycerate = phosphoenolpyruvate + H2O. The protein operates within carbohydrate degradation; glycolysis; pyruvate from D-glyceraldehyde 3-phosphate: step 4/5. Its function is as follows. Catalyzes the reversible conversion of 2-phosphoglycerate (2-PG) into phosphoenolpyruvate (PEP). It is essential for the degradation of carbohydrates via glycolysis. The protein is Enolase of Burkholderia lata (strain ATCC 17760 / DSM 23089 / LMG 22485 / NCIMB 9086 / R18194 / 383).